The primary structure comprises 309 residues: MTNSLYKKHIISIPELSRAELELIVKTAGQLKAEPNPELIKNKVVASCFFEPSTRTRLSFETAIQRIGGDVIGFDDGGNTSLAKKGETLSDSVQVISNYVDAFVMRHPQEGAARLASEFSNGVPVINAGDGANQHPTQTLLDLFTISETQDRLDNLNVAFVGDLKYGRTVHSLTQALAKFNNIRFFFVAPDALAMPDYILEDLDEAGISYSLHTDMETVIPELDILYMTRVQKERFDESEYAHIKSAYILTAALLEGARENLKVLHPLPRVDEITTDVDKTPHAYYFQQAGNGVYAREALLALVLNESL.

Carbamoyl phosphate-binding residues include Arg55 and Thr56. Lys85 is a binding site for L-aspartate. Carbamoyl phosphate contacts are provided by Arg106, His135, and Gln138. Residues Arg168 and Arg230 each coordinate L-aspartate. Leu268 and Pro269 together coordinate carbamoyl phosphate.

The protein belongs to the aspartate/ornithine carbamoyltransferase superfamily. ATCase family. In terms of assembly, heterododecamer (2C3:3R2) of six catalytic PyrB chains organized as two trimers (C3), and six regulatory PyrI chains organized as three dimers (R2).

The enzyme catalyses carbamoyl phosphate + L-aspartate = N-carbamoyl-L-aspartate + phosphate + H(+). Its pathway is pyrimidine metabolism; UMP biosynthesis via de novo pathway; (S)-dihydroorotate from bicarbonate: step 2/3. In terms of biological role, catalyzes the condensation of carbamoyl phosphate and aspartate to form carbamoyl aspartate and inorganic phosphate, the committed step in the de novo pyrimidine nucleotide biosynthesis pathway. In Vibrio vulnificus (strain YJ016), this protein is Aspartate carbamoyltransferase catalytic subunit.